The primary structure comprises 397 residues: Proteinase-activated receptor 2 (397 aa).

An N-terminal signal peptide occupies residues 1–25 (MRSLSLAWLLGGITLLAASASCNRT). Asparagine 23 carries an N-linked (GlcNAc...) asparagine glycan. The propeptide at 26–36 (VNAPGPNSKGR) is removed for receptor activation. Residues 37 to 71 (SLIGRLDTPPPITGKGAPVEPGFSVDEFSASVLTG) lie on the Extracellular side of the membrane. The chain crosses the membrane as a helical span at residues 72 to 101 (KLTTVFLPVIYIIVFVIGLPSNGMALWVFF). Topologically, residues 102–108 (FRTKKKH) are cytoplasmic. Residues 109–137 (PAVIYMANLALADLLSVIWFPLKISYHLH) form a helical membrane-spanning segment. The Extracellular segment spans residues 138-149 (GNDWTYGDALCK). An intrachain disulfide couples cysteine 148 to cysteine 226. A helical transmembrane segment spans residues 150–177 (VLIGFFYGNMYCSILFMTCLSVQRYWVI). At 178-183 (VNPMGH) the chain is on the cytoplasmic side. The helical transmembrane segment at 184–211 (SRKRANIAVGVSLAIWLLIFLVTIPLYV) threads the bilayer. The Extracellular portion of the chain corresponds to 212–235 (MRQTIYIPALNITTCHDVLPEEVL). N-linked (GlcNAc...) asparagine glycosylation occurs at asparagine 222. Residues 236–269 (VGDMFSYFLSLAIGVFLFPALLTASAYVLMIKTL) traverse the membrane as a helical segment. Topologically, residues 270 to 277 (RSSAMDEH) are cytoplasmic. The chain crosses the membrane as a helical span at residues 278–317 (SEKKRRRAIRLIITVLSMYFICFAPSNVLLVVHYFLIKSQ). Over 318 to 323 (RQSHVY) the chain is Extracellular. The chain crosses the membrane as a helical span at residues 324–347 (ALYLVALCLSTLNSCIDPFVYYFV). Residues 348–397 (SKDFRDQARNALLCRSVRTVKRMQISLTSNKFSRKSSSYSSSSTSVKTSY) lie on the Cytoplasmic side of the membrane. Cysteine 361 is lipidated: S-palmitoyl cysteine.

It belongs to the G-protein coupled receptor 1 family. Interacts with TLR4, COPS5 and TMED2. Interacts with GNAQ, GNA11, GNA12, GNA13 and GNA14. In terms of processing, a proteolytic cleavage generates a new N-terminus that functions as a tethered ligand. Activating serine proteases include trypsin, mast cell tryptase, coagulation factors VII and Xa, myeloblastin/PRTN3 and membrane-type serine protease 1/ST14. Proposed subsequent cleavage by serine proteases is leading to receptor deactivation and include neutrophil elastase and cathepsin G. At least in part, implicated proteases are also shown to activate the receptor; the glycosylation status of the receptor is thought to contribute to the difference. N-glycosylated and sialylated. Post-translationally, multiple phosphorylated on serine and threonine residues in the cytoplasmic region upon receptor activation; required for receptor desensitization and recruitment of beta-arrestin. In terms of processing, monoubiquitinated by Cbl at the plasma membrane and in early endosomes; not required for receptor endocytosis but for translocation to late endosomes or lysosomes. Deubiquitination involves Stambp and Usp8; required for lysosomal trafficking and receptor degradation.

The protein resides in the cell membrane. Its function is as follows. Receptor for trypsin and trypsin-like enzymes coupled to G proteins. Its function is mediated through the activation of several signaling pathways including phospholipase C (PLC), intracellular calcium, mitogen-activated protein kinase (MAPK), I-kappaB kinase/NF-kappaB and Rho. Can also be transactivated by cleaved F2R/PAR1. Involved in modulation of inflammatory responses and regulation of innate and adaptive immunity, and acts as a sensor for proteolytic enzymes generated during infection. Generally is promoting inflammation. Can signal synergistically with TLR4 and probably TLR2 in inflammatory responses and modulates Tlr3 signaling. Has a protective role in establishing the endothelial barrier; the activity involves coagulation factor X. Regulates endothelial cell barrier integrity during neutrophil extravasation, probably following proteolytic cleavage by PRTN3. Proposed to have a bronchoprotective role in airway epithelium, but also shown to compromise the airway epithelial barrier by interrupting E-cadherin adhesion. Involved in the regulation of vascular tone; activation results in hypotension presumably mediated by vasodilation. Associates with a subset of G proteins alpha subunits such as GNAQ, GNA11, GNA14, GNA12 and GNA13, but probably not with G(o)-alpha, G(i) subunit alpha-1 and G(i) subunit alpha-2. Believed to be a class B receptor which internalizes as a complex with arrestin and traffic with it to endosomal vesicles, presumably as desensitized receptor, for extended periods of time. Mediates inhibition of TNF-alpha stimulated JNK phosphorylation via coupling to G GNAQ and GNA11; the function involves dissociation of RIPK1 and Tradd from TNFR1. Mediates phosphorylation of nuclear factor NF-kappa-B RELA subunit at 'Ser-536'; the function involves Ikbkb and is predominantly independent of G proteins. Involved in cellular migration. Involved in cytoskeletal rearrangement and chemotaxis through beta-arrestin-promoted scaffolds; the function is independent of GNAQ and GNA11 and involves promotion of cofilin dephosphorylation and actin filament severing. Induces redistribution of COPS5 from the plasma membrane to the cytosol and activation of the JNK cascade is mediated by Cops5. Involved in the recruitment of leukocytes to the sites of inflammation and is the major PAR receptor capable of modulating eosinophil function such as pro-inflammatory cytokine secretion, superoxide production and degranulation. During inflammation promotes dendritic cell maturation, trafficking to the lymph nodes and subsequent T-cell activation. Involved in antimicrobial response of innate immune cells; activation enhances phagocytosis of Gram-positive and killing of Gram-negative bacteria. Acts synergistically with interferon-gamma in enhancing antiviral responses. Probably mediates activation of pro-inflammatory and pro-fibrotic responses in fibroblasts, triggered by coagulation factor Xa (F10). Probably mediates activation of barrier protective signaling responses in endothelial cells, triggered by coagulation factor Xa (F10). The protein is Proteinase-activated receptor 2 (F2rl1) of Rattus norvegicus (Rat).